A 225-amino-acid polypeptide reads, in one-letter code: Peptidyl-tRNA hydrolase (225 aa).

Tyr14 contributes to the tRNA binding site. His19 acts as the Proton acceptor in catalysis. Phe64, Asn66, and Asn112 together coordinate tRNA. Positions 184-225 (ALRMQPPKPEKPKPAAKAPEAQAPEAAPDARSALQKLADRFR) are disordered. A compositionally biased stretch (low complexity) spans 198–210 (AAKAPEAQAPEAA).

It belongs to the PTH family. As to quaternary structure, monomer.

It is found in the cytoplasm. The enzyme catalyses an N-acyl-L-alpha-aminoacyl-tRNA + H2O = an N-acyl-L-amino acid + a tRNA + H(+). Functionally, hydrolyzes ribosome-free peptidyl-tRNAs (with 1 or more amino acids incorporated), which drop off the ribosome during protein synthesis, or as a result of ribosome stalling. In terms of biological role, catalyzes the release of premature peptidyl moieties from peptidyl-tRNA molecules trapped in stalled 50S ribosomal subunits, and thus maintains levels of free tRNAs and 50S ribosomes. The sequence is that of Peptidyl-tRNA hydrolase from Cereibacter sphaeroides (strain KD131 / KCTC 12085) (Rhodobacter sphaeroides).